Here is a 310-residue protein sequence, read N- to C-terminus: MFKHVTVLLKETVDGLNIKPDGTYVDCTLGGGGHSSYLLSQLTEGGKLIAFDQDEIAIQNAKEKFSSYGEQFITVKSNFRYLAEKLQEIGITEVDGILFDLGVSSPQLDTPERGFSYHHDAPLDMRMDQDAPLTAYDVVNSWSYEQLVRIFFQYGEEKFSKQIARKIEAYRENKAIETTGELVELIKEGIPAPARRTGGHPAKRVFQAIRIAVNDELKVFEEALESAIEMVKPGGRVSVITFHSLEDRICKTTFKRNSTTPQLPPGLPIIPDEFKPKLKLITRKPILPSDIELEENNRARSAKLRIAEKR.

S-adenosyl-L-methionine-binding positions include 32 to 34, aspartate 52, phenylalanine 79, aspartate 100, and glutamine 107; that span reads GGH.

This sequence belongs to the methyltransferase superfamily. RsmH family.

The protein localises to the cytoplasm. It catalyses the reaction cytidine(1402) in 16S rRNA + S-adenosyl-L-methionine = N(4)-methylcytidine(1402) in 16S rRNA + S-adenosyl-L-homocysteine + H(+). Its function is as follows. Specifically methylates the N4 position of cytidine in position 1402 (C1402) of 16S rRNA. The protein is Ribosomal RNA small subunit methyltransferase H of Bacillus cereus (strain B4264).